The chain runs to 345 residues: L-rhamnose-proton symporter (345 aa).

Helical transmembrane passes span 4-24, 38-58, 68-88, 101-121, 131-151, 175-195, 214-234, 259-279, 290-310, and 323-343; these read AITM…CFYA, WSVG…ALLL, FSAA…IGNI, MGIG…TPLL, TAGG…VAIV, LVLA…MDAA, LPSY…FCFI, VLLS…YAWG, ISWM…GLLL, and VLSL…LGMA.

This sequence belongs to the L-rhamnose transporter (TC 2.A.7.6) family.

The protein resides in the cell inner membrane. The catalysed reaction is L-rhamnopyranose(in) + H(+)(in) = L-rhamnopyranose(out) + H(+)(out). Functionally, uptake of L-rhamnose across the cytoplasmic membrane with the concomitant transport of protons into the cell (symport system). The protein is L-rhamnose-proton symporter of Cronobacter sakazakii (strain ATCC BAA-894) (Enterobacter sakazakii).